A 428-amino-acid polypeptide reads, in one-letter code: Enolase (428 aa).

Glutamine 164 is a binding site for (2R)-2-phosphoglycerate. The Proton donor role is filled by glutamate 206. Mg(2+)-binding residues include aspartate 243, glutamate 286, and aspartate 313. Lysine 338, arginine 367, serine 368, and lysine 389 together coordinate (2R)-2-phosphoglycerate. Residue lysine 338 is the Proton acceptor of the active site.

It belongs to the enolase family. Mg(2+) is required as a cofactor.

Its subcellular location is the cytoplasm. It is found in the secreted. The protein localises to the cell surface. It carries out the reaction (2R)-2-phosphoglycerate = phosphoenolpyruvate + H2O. It participates in carbohydrate degradation; glycolysis; pyruvate from D-glyceraldehyde 3-phosphate: step 4/5. In terms of biological role, catalyzes the reversible conversion of 2-phosphoglycerate (2-PG) into phosphoenolpyruvate (PEP). It is essential for the degradation of carbohydrates via glycolysis. The sequence is that of Enolase from Dehalococcoides mccartyi (strain ATCC BAA-2266 / KCTC 15142 / 195) (Dehalococcoides ethenogenes (strain 195)).